A 439-amino-acid polypeptide reads, in one-letter code: Gap junction gamma-2 protein (439 aa).

Over 1 to 25 (MTNMSWSFLTRLLEEIHNHSTFVGK) the chain is Cytoplasmic. The chain crosses the membrane as a helical span at residues 26–46 (VWLTVLVVFRIVLTAVGGEAI). At 47–78 (YSDEQAKFTCNTRQPGCDNVCYDAFAPLSHVR) the chain is on the extracellular side. Residues 79–99 (FWVFQIVVISTPSVMYLGYAV) form a helical membrane-spanning segment. At 100–216 (HRLARASEQE…EGLMRVYVAQ (117 aa)) the chain is on the cytoplasmic side. Residues 108–178 (QERRRALRRR…AEEAGAEEAC (71 aa)) form a disordered region. The span at 112-125 (RALRRRPGPRRAPR) shows a compositional bias: basic residues. A compositionally biased stretch (acidic residues) spans 140 to 174 (DLGEEEPMLGLGEEEEEEETGAAEGAGEEAEEAGA). Residues 217 to 237 (LVARAAFEVAFLVGQYLLYGF) form a helical membrane-spanning segment. Over 238-265 (EVRPFFPCSRQPCPHVVDCFVSRPTEKT) the chain is Extracellular. A helical membrane pass occupies residues 266–286 (VFLLVMYVVSCLCLLLNLCEM). Residues 287 to 439 (AHLGLGSAQD…SRDGKTTVWI (153 aa)) are Cytoplasmic-facing. Positions 364–439 (AGDRDRDSSP…SRDGKTTVWI (76 aa)) are disordered. Phosphoserine is present on Ser-371. The span at 378-393 (PAASRGPPRAGAPASR) shows a compositional bias: low complexity.

This sequence belongs to the connexin family. Gamma-type subfamily. In terms of assembly, a connexon is composed of a hexamer of connexins. Interacts with TJP1. Expressed in central nervous system, in sciatic nerve and sural nerve. Also detected in skeletal muscles.

The protein localises to the cell membrane. It localises to the cell junction. The protein resides in the gap junction. Its function is as follows. One gap junction consists of a cluster of closely packed pairs of transmembrane channels, the connexons, through which materials of low MW diffuse from one cell to a neighboring cell. May play a role in myelination in central and peripheral nervous systems. The protein is Gap junction gamma-2 protein (GJC2) of Homo sapiens (Human).